Here is a 604-residue protein sequence, read N- to C-terminus: Elongation factor 4 (604 aa).

In terms of domain architecture, tr-type G spans 10 to 191 (KNIRNFSIIA…KIITTIPAPS (182 aa)). GTP is bound by residues 22–27 (DHGKST) and 138–141 (NKID).

It belongs to the TRAFAC class translation factor GTPase superfamily. Classic translation factor GTPase family. LepA subfamily.

The protein resides in the cell inner membrane. The catalysed reaction is GTP + H2O = GDP + phosphate + H(+). Functionally, required for accurate and efficient protein synthesis under certain stress conditions. May act as a fidelity factor of the translation reaction, by catalyzing a one-codon backward translocation of tRNAs on improperly translocated ribosomes. Back-translocation proceeds from a post-translocation (POST) complex to a pre-translocation (PRE) complex, thus giving elongation factor G a second chance to translocate the tRNAs correctly. Binds to ribosomes in a GTP-dependent manner. This chain is Elongation factor 4, found in Helicobacter pylori (strain P12).